A 155-amino-acid polypeptide reads, in one-letter code: DNA-directed RNA polymerase 1A (155 aa).

Residue aspartate 88 is part of the active site.

This sequence belongs to the phage and mitochondrial RNA polymerase family.

The catalysed reaction is RNA(n) + a ribonucleoside 5'-triphosphate = RNA(n+1) + diphosphate. In terms of biological role, DNA-dependent RNA polymerase catalyzes the transcription of DNA into RNA using the four ribonucleoside triphosphates as substrates. The protein is DNA-directed RNA polymerase 1A (RPOT1-SYL) of Nicotiana tabacum (Common tobacco).